The chain runs to 54 residues: Relaxin (54 aa).

The residue at position 1 (Q1) is a Pyrrolidone carboxylic acid. Cystine bridges form between C10-C41, C22-C54, and C40-C45.

The protein belongs to the insulin family. As to quaternary structure, heterodimer of a B chain and an A chain linked by two disulfide bonds.

It localises to the secreted. Relaxin is an ovarian hormone that acts with estrogen to produce dilatation of the birth canal in many mammals. This Balaenoptera edeni (Pigmy Bryde's whale) protein is Relaxin.